The primary structure comprises 225 residues: PKHD-type hydroxylase YbiX (225 aa).

The Fe2OG dioxygenase domain maps to 78 to 177 (TLSTPLFNRY…RVASFMWIQS (100 aa)). Fe cation is bound by residues H96, D98, and H158. R168 serves as a coordination point for 2-oxoglutarate.

It depends on Fe(2+) as a cofactor. L-ascorbate is required as a cofactor.

The protein is PKHD-type hydroxylase YbiX of Shigella boydii serotype 4 (strain Sb227).